The chain runs to 290 residues: Acetyl-coenzyme A carboxylase carboxyl transferase subunit beta (290 aa).

The CoA carboxyltransferase N-terminal domain occupies 28-290 (LMNKCSKCGT…TVREGLSHGG (263 aa)). Residues Cys32, Cys35, Cys51, and Cys54 each coordinate Zn(2+). A C4-type zinc finger spans residues 32-54 (CSKCGTIQYSKELDKNLKVCSSC).

It belongs to the AccD/PCCB family. In terms of assembly, acetyl-CoA carboxylase is a heterohexamer composed of biotin carboxyl carrier protein (AccB), biotin carboxylase (AccC) and two subunits each of ACCase subunit alpha (AccA) and ACCase subunit beta (AccD). Requires Zn(2+) as cofactor.

Its subcellular location is the cytoplasm. The catalysed reaction is N(6)-carboxybiotinyl-L-lysyl-[protein] + acetyl-CoA = N(6)-biotinyl-L-lysyl-[protein] + malonyl-CoA. It functions in the pathway lipid metabolism; malonyl-CoA biosynthesis; malonyl-CoA from acetyl-CoA: step 1/1. Component of the acetyl coenzyme A carboxylase (ACC) complex. Biotin carboxylase (BC) catalyzes the carboxylation of biotin on its carrier protein (BCCP) and then the CO(2) group is transferred by the transcarboxylase to acetyl-CoA to form malonyl-CoA. In Paenibacillus sp. (strain JDR-2), this protein is Acetyl-coenzyme A carboxylase carboxyl transferase subunit beta.